The primary structure comprises 353 residues: Photosystem II D2 protein (353 aa).

At T2 the chain carries N-acetylthreonine. Residue T2 is modified to Phosphothreonine. Residues 41–61 (CAYFSLGGWFTGTTFVTSWYT) form a helical membrane-spanning segment. H118 is a chlorophyll a binding site. The helical transmembrane segment at 125 to 141 (GFMLRQFELARSVQLRP) threads the bilayer. Pheophytin a-binding residues include Q130 and N143. The chain crosses the membrane as a helical span at residues 153-166 (VFVSVFLIYPLGQS). H198 contacts chlorophyll a. The helical transmembrane segment at 208–228 (AALLCAIHGATVENTLFEDGD) threads the bilayer. 2 residues coordinate a plastoquinone: H215 and F262. H215 is a binding site for Fe cation. Residue H269 coordinates Fe cation. Residues 279–295 (GLWMSAIGVVGLALNLR) traverse the membrane as a helical segment.

It belongs to the reaction center PufL/M/PsbA/D family. As to quaternary structure, PSII is composed of 1 copy each of membrane proteins PsbA, PsbB, PsbC, PsbD, PsbE, PsbF, PsbH, PsbI, PsbJ, PsbK, PsbL, PsbM, PsbT, PsbX, PsbY, PsbZ, Psb30/Ycf12, at least 3 peripheral proteins of the oxygen-evolving complex and a large number of cofactors. It forms dimeric complexes. Requires The D1/D2 heterodimer binds P680, chlorophylls that are the primary electron donor of PSII, and subsequent electron acceptors. It shares a non-heme iron and each subunit binds pheophytin, quinone, additional chlorophylls, carotenoids and lipids. There is also a Cl(-1) ion associated with D1 and D2, which is required for oxygen evolution. The PSII complex binds additional chlorophylls, carotenoids and specific lipids. as cofactor.

Its subcellular location is the plastid. It localises to the chloroplast thylakoid membrane. It carries out the reaction 2 a plastoquinone + 4 hnu + 2 H2O = 2 a plastoquinol + O2. Photosystem II (PSII) is a light-driven water:plastoquinone oxidoreductase that uses light energy to abstract electrons from H(2)O, generating O(2) and a proton gradient subsequently used for ATP formation. It consists of a core antenna complex that captures photons, and an electron transfer chain that converts photonic excitation into a charge separation. The D1/D2 (PsbA/PsbD) reaction center heterodimer binds P680, the primary electron donor of PSII as well as several subsequent electron acceptors. D2 is needed for assembly of a stable PSII complex. In Physcomitrium patens (Spreading-leaved earth moss), this protein is Photosystem II D2 protein.